Reading from the N-terminus, the 454-residue chain is MGPDAKKQKLQSEDHLQNDLPVSCFLAWCKKVGLELNPKVYISTEGTVSQYGMLAREDLSDGELLFSIPRSAILSQNTTRIRDLIEKEQDSLQSCSGWVPLLISLLYEATDSSSHWAPYFGLWPELDPPDMPMFWSEEEQTKLLQGTGILEAVHKDLKNIEKEYNSIVLPFIRRNPEKFCPMKHTLDLYKRLVAFVMAYSFQEPQEEDEEEDIEKDILPPMMVPVADLLNHVAQHNAHLEFTPECLRMITTKSVCAGQELFNTYGQMANWQLLHMYGFAEPHPQNCNETADIQMVTVREAAFQVARTEEDRLEMQKRWDFLCHIEIVGEEGAFVFGLEEVMTEEELKACLKVLCMSTDEFAEYKENDGWEEDEDNDEQTLLTQEISRLPIPWRKLLHLSAELTLKAYKTELSMDEALVNDPTAYAKLSSREQHSLQVQYGQKKILHLLLELTKS.

In terms of domain architecture, SET spans 38 to 265; sequence PKVYISTEGT…AGQELFNTYG (228 aa).

This sequence belongs to the class V-like SAM-binding methyltransferase superfamily. Histone-lysine methyltransferase family. SETD6 subfamily.

It is found in the nucleus. Protein-lysine N-methyltransferase. In Xenopus tropicalis (Western clawed frog), this protein is N-lysine methyltransferase setd6 (setd6).